We begin with the raw amino-acid sequence, 271 residues long: L-aspartate dehydrogenase (271 aa).

2 residues coordinate NAD(+): alanine 124 and asparagine 192. Histidine 222 is an active-site residue.

The protein belongs to the L-aspartate dehydrogenase family.

The enzyme catalyses L-aspartate + NADP(+) + H2O = oxaloacetate + NH4(+) + NADPH + H(+). It catalyses the reaction L-aspartate + NAD(+) + H2O = oxaloacetate + NH4(+) + NADH + H(+). Its pathway is cofactor biosynthesis; NAD(+) biosynthesis; iminoaspartate from L-aspartate (dehydrogenase route): step 1/1. In terms of biological role, specifically catalyzes the NAD or NADP-dependent dehydrogenation of L-aspartate to iminoaspartate. The protein is L-aspartate dehydrogenase of Methanosarcina mazei (strain ATCC BAA-159 / DSM 3647 / Goe1 / Go1 / JCM 11833 / OCM 88) (Methanosarcina frisia).